Consider the following 163-residue polypeptide: Nucleotide-binding protein SYNPCC7002_A1983 (163 aa).

It belongs to the YajQ family.

Its function is as follows. Nucleotide-binding protein. The sequence is that of Nucleotide-binding protein SYNPCC7002_A1983 from Picosynechococcus sp. (strain ATCC 27264 / PCC 7002 / PR-6) (Agmenellum quadruplicatum).